The sequence spans 86 residues: Large ribosomal subunit protein uL23 (86 aa).

The protein belongs to the universal ribosomal protein uL23 family. As to quaternary structure, part of the 50S ribosomal subunit. Contacts protein L29.

Its function is as follows. Binds to 23S rRNA. One of the proteins that surrounds the polypeptide exit tunnel on the outside of the ribosome. The sequence is that of Large ribosomal subunit protein uL23 from Methanocaldococcus jannaschii (strain ATCC 43067 / DSM 2661 / JAL-1 / JCM 10045 / NBRC 100440) (Methanococcus jannaschii).